The chain runs to 210 residues: Probable septum site-determining protein MinC (210 aa).

Belongs to the MinC family. As to quaternary structure, interacts with MinD and FtsZ.

Its function is as follows. Cell division inhibitor that blocks the formation of polar Z ring septums. Rapidly oscillates between the poles of the cell to destabilize FtsZ filaments that have formed before they mature into polar Z rings. Prevents FtsZ polymerization. The chain is Probable septum site-determining protein MinC from Thermotoga neapolitana (strain ATCC 49049 / DSM 4359 / NBRC 107923 / NS-E).